We begin with the raw amino-acid sequence, 119 residues long: Fluoride-specific ion channel FluC 2 (119 aa).

4 consecutive transmembrane segments (helical) span residues 1 to 21 (MITV…RYGI), 33 to 53 (FPYA…FIFS), 56 to 76 (FSPF…TTFS), and 93 to 113 (VFTL…FLGY). Na(+) contacts are provided by G70 and T73.

It belongs to the fluoride channel Fluc/FEX (TC 1.A.43) family.

The protein resides in the cell membrane. The enzyme catalyses fluoride(in) = fluoride(out). With respect to regulation, na(+) is not transported, but it plays an essential structural role and its presence is essential for fluoride channel function. Fluoride-specific ion channel. Important for reducing fluoride concentration in the cell, thus reducing its toxicity. The sequence is that of Fluoride-specific ion channel FluC 2 from Lactobacillus johnsonii (strain CNCM I-12250 / La1 / NCC 533).